We begin with the raw amino-acid sequence, 212 residues long: MQTVAVIDYGMGNLHSVAKALEHVGAGRVLITSDAKVIREADRIVFPGVGAIRDCMAEIRRLGFDSLVQEVSQDRPFLGICVGMQALLDSSEENGGVDCIGMFPGQVKFFGKDLHEEGEHLKVPHMGWNQVAQAVDHPLWHDIPDQARFYFVHSFYIDAANQRQVVGRGHYGLDFAAALADGSRFAVQFHPEKSHTHGLQLLQNFAAWDGRW.

One can recognise a Glutamine amidotransferase type-1 domain in the interval 3-212 (TVAVIDYGMG…QNFAAWDGRW (210 aa)). Cysteine 81 functions as the Nucleophile in the catalytic mechanism. Residues histidine 190 and glutamate 192 contribute to the active site.

In terms of assembly, heterodimer of HisH and HisF.

It is found in the cytoplasm. It catalyses the reaction 5-[(5-phospho-1-deoxy-D-ribulos-1-ylimino)methylamino]-1-(5-phospho-beta-D-ribosyl)imidazole-4-carboxamide + L-glutamine = D-erythro-1-(imidazol-4-yl)glycerol 3-phosphate + 5-amino-1-(5-phospho-beta-D-ribosyl)imidazole-4-carboxamide + L-glutamate + H(+). The enzyme catalyses L-glutamine + H2O = L-glutamate + NH4(+). It functions in the pathway amino-acid biosynthesis; L-histidine biosynthesis; L-histidine from 5-phospho-alpha-D-ribose 1-diphosphate: step 5/9. Functionally, IGPS catalyzes the conversion of PRFAR and glutamine to IGP, AICAR and glutamate. The HisH subunit catalyzes the hydrolysis of glutamine to glutamate and ammonia as part of the synthesis of IGP and AICAR. The resulting ammonia molecule is channeled to the active site of HisF. This is Imidazole glycerol phosphate synthase subunit HisH from Pseudomonas syringae pv. syringae (strain B728a).